The chain runs to 462 residues: MNLLKQIPKVDKVLSWEGVQTLLETHPRPVVMKAVRNVLEVLRAIVLREEGDAGLFTDEAIMKRVNRELDEINSLNLKRLVNGTGVVIHTNLGRSPLPESVRQTLNEIAFGYSNLEFDLATGERGSRYSHVEEILCELTGAEAALVVNNNAAAVLLALSSLAAGREVIVSRGELVEIGGSFRIPDVMRQSGAILREVGATNRTHLQDYSAAVATETGLLLKVHCSNFAVVGFTAEVSAEQLVELGRQHSLPVMADVGSGNLVELSRRLGCNEPTVQEFVSAGVDVITFSGDKLLGGPQAGIIVGRRELLATMKKHPLLRAVRIDKLTLAALEGTLQLYRDERRALQEIPTLRMLALSKEELAETAKRLAARLQKVVPPVVTLALVEGFSQVGGGALPLLQLPTTLISVSVGDKSAQEIEKVMRLSPVPVIGRIFKGAFLLDPRTINEEDISALTAALQGIVP.

Lys292 is modified (N6-(pyridoxal phosphate)lysine).

Belongs to the SelA family. Pyridoxal 5'-phosphate is required as a cofactor.

It localises to the cytoplasm. It catalyses the reaction L-seryl-tRNA(Sec) + selenophosphate + H(+) = L-selenocysteinyl-tRNA(Sec) + phosphate. The protein operates within aminoacyl-tRNA biosynthesis; selenocysteinyl-tRNA(Sec) biosynthesis; selenocysteinyl-tRNA(Sec) from L-seryl-tRNA(Sec) (bacterial route): step 1/1. Functionally, converts seryl-tRNA(Sec) to selenocysteinyl-tRNA(Sec) required for selenoprotein biosynthesis. This chain is L-seryl-tRNA(Sec) selenium transferase, found in Geotalea daltonii (strain DSM 22248 / JCM 15807 / FRC-32) (Geobacter daltonii).